Consider the following 632-residue polypeptide: Cyclic GMP-AMP synthase-like receptor 2 (632 aa).

Mg(2+) is bound by residues aspartate 71, aspartate 73, and aspartate 181. Aspartate 295 contributes to the Mn(2+) binding site.

It belongs to the mab-21 family. Mg(2+) serves as cofactor. Requires Mn(2+) as cofactor.

Functionally, nucleotidyltransferase that catalyzes the formation of some cyclic nucleotide and plays a key role in innate immunity. Directly binds some unknown ligand, activating the nucleotidyltransferase activity, leading to synthesis of a second messenger that binds to and activates Sting, thereby triggering the immune response via activation of the NF-kappa-B transcription factor. This chain is Cyclic GMP-AMP synthase-like receptor 2, found in Crassostrea virginica (Eastern oyster).